A 988-amino-acid polypeptide reads, in one-letter code: MLHSLVPRYNKCVPFPTLRTDNNGARKQAEHPNNQSHHNHPHPTSNPNELPKPKRVLYPRENIRIGWKQSERKWQVGTGMINVGNTCYLNSTLQALLHIPALANWLVSEQAHLADCNVAEPGSGCIICAMAKTLLATQSNQSAVRPFLIYSKLKQICKHMVVGRQEDAHEFLRFLVEAMERAYLMRFRNYKELDQLVKETTPLGQIFGGYLRSEVRCLSCNHVSITFQHFQDLLLDIRKADSLEDAFEGHFSRERLEDMGYKCEGCKKKVSATKQFSLERAPITLCIQLKRFSMIGNKLTKQISFKPRIDLSKYAARSPAAQAQPLTYRLVSMVTHLGASQHCGHYTAIGSTDTGSFYNFDDSYVRPITMQNVCNTNAYIMFFELDLSQAASPPANRPNGVRLTNGHSTTPVPAATVSSPSPTRFIGPQLPPVGANGYTNGNAQKTAIQFKQQNQQNGLQLGTGKFQDTAKPPLVGAYAKGEATSAPTANGNKSSSPSSNSSSNHKSINQQQYLPISSDDEDIDDEMKPGPTTAQLPSMPNMTEDSTEPKAKSPVKIHLKTPVKTPLKSLVPYESASEEEEAPLPNPRQSTEGEDFSESDQESGQTNGHSKTNGSLTNGSASSSVHVNNSKQKTDAIDEIFKSLKKSADSEEDDDEEEPSIQLTNGWHPQKQSQSQSKAPPSPKTPPSPAVIKSKTGIWKVTRNDEVDAIDDDDDAVVVEGAPVKIPTPNKTHRNPFSSSKPSTDSPATPGAKRQKLLNGSALKSHQQPRVGNGYQSNVTSNGSTVNELLKQSYRGYGASVLSWNGKPAELEKEPFELVCAKRIAGHGSVEGSDIVEGSVAVDAAVTSSSDSNDVVVIAVALLVDAREQRQRDLDDDEENEMDRGRQRKVKSGSAKGNNASNSTPGYNPFQEYEGQKRWNKNGGGGGFSRFHNQNYRQNFQQRNKFKFNRFGGQGSAKFQQQRALQRHLSAGGGFSRRQPSAQQQQQT.

The disordered stretch occupies residues 16 to 55; it reads PTLRTDNNGARKQAEHPNNQSHHNHPHPTSNPNELPKPKR. A compositionally biased stretch (low complexity) spans 31–48; sequence HPNNQSHHNHPHPTSNPN. The region spanning 78–386 is the USP domain; the sequence is TGMINVGNTC…NAYIMFFELD (309 aa). The active-site Nucleophile is cysteine 87. Histidine 345 (proton acceptor) is an active-site residue. Disordered stretches follow at residues 393–422, 483–782, and 868–988; these read PPANRPNGVRLTNGHSTTPVPAATVSSPSP, ATSA…VTSN, and EQRQ…QQQT. Low complexity-rich tracts occupy residues 408-422 and 490-509; these read STTPVPAATVSSPSP and NGNKSSSPSSNSSSNHKSIN. Residues serine 419 and serine 421 each carry the phosphoserine modification. Residues 532–544 show a composition bias toward polar residues; that stretch reads TTAQLPSMPNMTE. Phosphothreonine occurs at positions 561 and 565. 2 positions are modified to phosphoserine: serine 575 and serine 577. Acidic residues predominate over residues 592–601; that stretch reads EGEDFSESDQ. Over residues 602–631 the composition is skewed to polar residues; it reads ESGQTNGHSKTNGSLTNGSASSSVHVNNSK. Residues 632 to 649 show a composition bias toward basic and acidic residues; the sequence is QKTDAIDEIFKSLKKSAD. Serine 650 carries the post-translational modification Phosphoserine. The segment covering 650-659 has biased composition (acidic residues); that stretch reads SEEDDDEEEP. The segment covering 669 to 679 has biased composition (low complexity); the sequence is PQKQSQSQSKA. Positions 680–689 are enriched in pro residues; it reads PPSPKTPPSP. Serine 682 carries the phosphoserine modification. Position 685 is a phosphothreonine (threonine 685). The residue at position 688 (serine 688) is a Phosphoserine. The span at 707 to 717 shows a compositional bias: acidic residues; it reads VDAIDDDDDAV. Threonine 728 bears the Phosphothreonine mark. Over residues 735–747 the composition is skewed to polar residues; sequence NPFSSSKPSTDSP. At serine 746 the chain carries Phosphoserine. Threonine 749 is modified (phosphothreonine). The span at 762-782 shows a compositional bias: polar residues; sequence ALKSHQQPRVGNGYQSNVTSN. Composition is skewed to low complexity over residues 892–903 and 930–943; these read SGSAKGNNASNS and RFHNQNYRQNFQQR.

It belongs to the peptidase C19 family. Interacts with atms/PAF1, but not with CycT.

Its subcellular location is the nucleus. The protein localises to the nucleolus. It catalyses the reaction Thiol-dependent hydrolysis of ester, thioester, amide, peptide and isopeptide bonds formed by the C-terminal Gly of ubiquitin (a 76-residue protein attached to proteins as an intracellular targeting signal).. In terms of biological role, required for maintaining multiple types of adult stem cells, including male and female germline, epithelial follicle cell and intestinal stem cells. May function as a transcriptional repressor by continually deubiquiting histone H2B at the promoters of genes critical for cellular differentiation, thereby preventing histone H3 'Lys-4' trimethylation (H3K4). Controls selective autophagy activation by ubiquitinated proteins. This Drosophila simulans (Fruit fly) protein is Ubiquitin carboxyl-terminal hydrolase 36 (Usp36).